The sequence spans 229 residues: Dephospho-CoA kinase (229 aa).

The region spanning 3–203 (TVGLTGGIGS…ARRDAKATAK (201 aa)) is the DPCK domain. 11–16 (GSGKSA) is an ATP binding site. The segment at 203–229 (KATAKAETVASGTDTAASGTDTAAPAG) is disordered.

The protein belongs to the CoaE family.

It localises to the cytoplasm. It catalyses the reaction 3'-dephospho-CoA + ATP = ADP + CoA + H(+). The protein operates within cofactor biosynthesis; coenzyme A biosynthesis; CoA from (R)-pantothenate: step 5/5. Its function is as follows. Catalyzes the phosphorylation of the 3'-hydroxyl group of dephosphocoenzyme A to form coenzyme A. This is Dephospho-CoA kinase from Frankia casuarinae (strain DSM 45818 / CECT 9043 / HFP020203 / CcI3).